Here is a 129-residue protein sequence, read N- to C-terminus: Small ribosomal subunit protein uS11 (129 aa).

Belongs to the universal ribosomal protein uS11 family. As to quaternary structure, part of the 30S ribosomal subunit. Interacts with proteins S7 and S18. Binds to IF-3.

In terms of biological role, located on the platform of the 30S subunit, it bridges several disparate RNA helices of the 16S rRNA. Forms part of the Shine-Dalgarno cleft in the 70S ribosome. The sequence is that of Small ribosomal subunit protein uS11 from Hydrogenovibrio crunogenus (strain DSM 25203 / XCL-2) (Thiomicrospira crunogena).